Here is a 256-residue protein sequence, read N- to C-terminus: Rhamnolipids biosynthesis 3-oxoacyl-[acyl-carrier-protein] reductase (256 aa).

14–38 contributes to the NADP(+) binding site; sequence VTGGSRGIGQMIAQGLLEAGARVFI. Serine 148 is a substrate binding site. The Proton acceptor role is filled by tyrosine 162.

Belongs to the short-chain dehydrogenases/reductases (SDR) family.

It carries out the reaction a (3R)-hydroxyacyl-[ACP] + NADP(+) = a 3-oxoacyl-[ACP] + NADPH + H(+). It participates in lipid metabolism; rhamnolipid biosynthesis. Its function is as follows. Required for the synthesis of the beta-hydroxy acid moiety of rhamnolipids. This Pseudomonas aeruginosa (strain ATCC 15692 / DSM 22644 / CIP 104116 / JCM 14847 / LMG 12228 / 1C / PRS 101 / PAO1) protein is Rhamnolipids biosynthesis 3-oxoacyl-[acyl-carrier-protein] reductase (rhlG).